Reading from the N-terminus, the 139-residue chain is Large ribosomal subunit protein uL13c (139 aa).

It belongs to the universal ribosomal protein uL13 family. In terms of assembly, part of the 50S ribosomal subunit.

The protein localises to the plastid. The protein resides in the chloroplast. The protein is Large ribosomal subunit protein uL13c of Trieres chinensis (Marine centric diatom).